Reading from the N-terminus, the 95-residue chain is Large ribosomal subunit protein uL23 (95 aa).

It belongs to the universal ribosomal protein uL23 family. Part of the 50S ribosomal subunit. Contacts protein L29, and trigger factor when it is bound to the ribosome.

In terms of biological role, one of the early assembly proteins it binds 23S rRNA. One of the proteins that surrounds the polypeptide exit tunnel on the outside of the ribosome. Forms the main docking site for trigger factor binding to the ribosome. In Desulfitobacterium hafniense (strain DSM 10664 / DCB-2), this protein is Large ribosomal subunit protein uL23.